The primary structure comprises 358 residues: MRERLLAAEKVKSIEWHGDRLSLLDQRKLPTEEVWHSCDSAAAVADAIRDMVVRGAPAIGISAAYALVLAARTRMAAGGDWRQALEEDVALLAASRPTAVNLFWALNQMRERLERLKPGEDPCAALEAQAISIHESDREANLAMAQFGVDLIRRHQGNPQNLLTHCNTGALATGGFGTALGVIRAAHLDGLVERVYVDETRPWLQGSRLTAWELLGDGVPATLNVDSAAAHLMKSRGISWVIVGADRITANGDVANKIGTYQLAVLAMHHGVRFMVVAPSSTIDMALESGDEILLEERAGSELLEVNGQRFAAEIEVFNPVFDVTPADLIDAIVTEKGVVERPNAAKMTELMNRKRLH.

Substrate contacts are provided by residues arginine 54–alanine 56, arginine 96, and glutamine 205. Residue aspartate 246 is the Proton donor of the active site. Asparagine 256–lysine 257 contacts substrate.

Belongs to the eIF-2B alpha/beta/delta subunits family. MtnA subfamily.

It carries out the reaction 5-(methylsulfanyl)-alpha-D-ribose 1-phosphate = 5-(methylsulfanyl)-D-ribulose 1-phosphate. It participates in amino-acid biosynthesis; L-methionine biosynthesis via salvage pathway; L-methionine from S-methyl-5-thio-alpha-D-ribose 1-phosphate: step 1/6. Its function is as follows. Catalyzes the interconversion of methylthioribose-1-phosphate (MTR-1-P) into methylthioribulose-1-phosphate (MTRu-1-P). This chain is Methylthioribose-1-phosphate isomerase, found in Stutzerimonas stutzeri (strain A1501) (Pseudomonas stutzeri).